The sequence spans 239 residues: tRNA (guanine-N(7)-)-methyltransferase (239 aa).

Glu69, Glu94, Asp121, and Asp144 together coordinate S-adenosyl-L-methionine. The active site involves Asp144. Residues Lys148, Asp180, and 217-220 each bind substrate; that span reads TKFE.

The protein belongs to the class I-like SAM-binding methyltransferase superfamily. TrmB family.

The catalysed reaction is guanosine(46) in tRNA + S-adenosyl-L-methionine = N(7)-methylguanosine(46) in tRNA + S-adenosyl-L-homocysteine. It participates in tRNA modification; N(7)-methylguanine-tRNA biosynthesis. Its function is as follows. Catalyzes the formation of N(7)-methylguanine at position 46 (m7G46) in tRNA. The polypeptide is tRNA (guanine-N(7)-)-methyltransferase (Alcanivorax borkumensis (strain ATCC 700651 / DSM 11573 / NCIMB 13689 / SK2)).